An 808-amino-acid chain; its full sequence is Probable inorganic carbon transporter subunit DabA (808 aa).

Residues cysteine 335, aspartate 337, histidine 497, and cysteine 512 each coordinate Zn(2+).

It belongs to the inorganic carbon transporter (TC 9.A.2) DabA family. As to quaternary structure, forms a complex with DabB. The cofactor is Zn(2+).

Its subcellular location is the cell inner membrane. Part of an energy-coupled inorganic carbon pump. The protein is Probable inorganic carbon transporter subunit DabA of Rhodopseudomonas palustris (strain ATCC BAA-98 / CGA009).